A 148-amino-acid polypeptide reads, in one-letter code: UPF0756 membrane protein YeaL (148 aa).

4 helical membrane passes run 14 to 34 (ALGF…LIIV), 51 to 71 (LSIG…SGTL), 86 to 106 (LVAI…VTLM), and 121 to 141 (VLGV…AGLV).

This sequence belongs to the UPF0756 family.

The protein localises to the cell membrane. In Escherichia coli (strain B / REL606), this protein is UPF0756 membrane protein YeaL.